A 196-amino-acid chain; its full sequence is MALVPMVIEQTNRGERAYDIYSRLLRDNIIFLGTPIDDQIANLVIAQLLFLSAEDPDKDIQLYINSPGGSITAGLAIYDTMQFIKNDVVTYCIGQAASMGAFLLMSGTAGKRFALPNSRILIHQPSMGGLSGQATDIDIHAREILRIREITNNLMSKHTGQSLERIERDVERDFIMNAPQAKEYGIIDEIIDRPRV.

Ser98 serves as the catalytic Nucleophile. Residue His123 is part of the active site.

The protein belongs to the peptidase S14 family. Fourteen ClpP subunits assemble into 2 heptameric rings which stack back to back to give a disk-like structure with a central cavity, resembling the structure of eukaryotic proteasomes.

The protein resides in the cytoplasm. It catalyses the reaction Hydrolysis of proteins to small peptides in the presence of ATP and magnesium. alpha-casein is the usual test substrate. In the absence of ATP, only oligopeptides shorter than five residues are hydrolyzed (such as succinyl-Leu-Tyr-|-NHMec, and Leu-Tyr-Leu-|-Tyr-Trp, in which cleavage of the -Tyr-|-Leu- and -Tyr-|-Trp bonds also occurs).. Cleaves peptides in various proteins in a process that requires ATP hydrolysis. Has a chymotrypsin-like activity. Plays a major role in the degradation of misfolded proteins. This Acidobacterium capsulatum (strain ATCC 51196 / DSM 11244 / BCRC 80197 / JCM 7670 / NBRC 15755 / NCIMB 13165 / 161) protein is ATP-dependent Clp protease proteolytic subunit.